The sequence spans 160 residues: Protein YpjC (160 aa).

This Escherichia coli (strain K12) protein is Protein YpjC (ypjC).